The sequence spans 677 residues: DNA ligase (677 aa).

Residues 32–36 (DSEYD), 81–82 (SL), and Glu-112 each bind NAD(+). Lys-114 serves as the catalytic N6-AMP-lysine intermediate. Arg-135, Glu-171, Lys-288, and Lys-312 together coordinate NAD(+). 4 residues coordinate Zn(2+): Cys-416, Cys-419, Cys-434, and Cys-439. The BRCT domain occupies 598–677 (YKPLPLSGVE…QEFINMLEQS (80 aa)).

Belongs to the NAD-dependent DNA ligase family. LigA subfamily. It depends on Mg(2+) as a cofactor. Requires Mn(2+) as cofactor.

The catalysed reaction is NAD(+) + (deoxyribonucleotide)n-3'-hydroxyl + 5'-phospho-(deoxyribonucleotide)m = (deoxyribonucleotide)n+m + AMP + beta-nicotinamide D-nucleotide.. Its function is as follows. DNA ligase that catalyzes the formation of phosphodiester linkages between 5'-phosphoryl and 3'-hydroxyl groups in double-stranded DNA using NAD as a coenzyme and as the energy source for the reaction. It is essential for DNA replication and repair of damaged DNA. The sequence is that of DNA ligase from Dehalococcoides mccartyi (strain ATCC BAA-2266 / KCTC 15142 / 195) (Dehalococcoides ethenogenes (strain 195)).